Reading from the N-terminus, the 111-residue chain is SYFVEWIPNNVKTAVCDIPPRGLKMSATFIGNSTAIQELFKRISEQFTAMFRRKAFLHWYTGEGMDEMEFTEAESNMNDLVSEYQQYQDATAEDEGEFDEEEAEGEGQEYA.

Residues 82–111 (SEYQQYQDATAEDEGEFDEEEAEGEGQEYA) are disordered. Residues 91–111 (TAEDEGEFDEEEAEGEGQEYA) show a composition bias toward acidic residues.

This sequence belongs to the tubulin family. In terms of assembly, dimer of alpha and beta chains. A typical microtubule is a hollow water-filled tube with an outer diameter of 25 nm and an inner diameter of 15 nM. Alpha-beta heterodimers associate head-to-tail to form protofilaments running lengthwise along the microtubule wall with the beta-tubulin subunit facing the microtubule plus end conferring a structural polarity. Microtubules usually have 13 protofilaments but different protofilament numbers can be found in some organisms and specialized cells. It depends on Mg(2+) as a cofactor.

The protein localises to the cytoplasm. The protein resides in the cytoskeleton. Tubulin is the major constituent of microtubules, a cylinder consisting of laterally associated linear protofilaments composed of alpha- and beta-tubulin heterodimers. Microtubules grow by the addition of GTP-tubulin dimers to the microtubule end, where a stabilizing cap forms. Below the cap, tubulin dimers are in GDP-bound state, owing to GTPase activity of alpha-tubulin. The sequence is that of Tubulin beta chain from Lymnaea stagnalis (Great pond snail).